A 455-amino-acid polypeptide reads, in one-letter code: UDP-N-acetylmuramoylalanine--D-glutamate ligase (455 aa).

Position 118–124 (118–124 (GTNGKST)) interacts with ATP.

This sequence belongs to the MurCDEF family.

The protein resides in the cytoplasm. The catalysed reaction is UDP-N-acetyl-alpha-D-muramoyl-L-alanine + D-glutamate + ATP = UDP-N-acetyl-alpha-D-muramoyl-L-alanyl-D-glutamate + ADP + phosphate + H(+). The protein operates within cell wall biogenesis; peptidoglycan biosynthesis. Cell wall formation. Catalyzes the addition of glutamate to the nucleotide precursor UDP-N-acetylmuramoyl-L-alanine (UMA). The chain is UDP-N-acetylmuramoylalanine--D-glutamate ligase from Myxococcus xanthus (strain DK1622).